The following is a 1227-amino-acid chain: Tyrosine-protein kinase receptor ver-3 (1227 aa).

The first 17 residues, 1–17, serve as a signal peptide directing secretion; that stretch reads MKLKLTVLLILVHASAS. The Extracellular portion of the chain corresponds to 18–764; that stretch reads YKPPAIEVED…VQVNNAPKGS (747 aa). The 91-residue stretch at 20-110 folds into the Ig-like C2-type 1 domain; the sequence is PPAIEVEDYQ…RESDTGTYSC (91 aa). Cys52 and Cys110 form a disulfide bridge. 7 N-linked (GlcNAc...) asparagine glycosylation sites follow: Asn119, Asn211, Asn245, Asn255, Asn381, Asn425, and Asn528. Residues 200-325 form the Ig-like C2-type 2 domain; it reads VNFECRYKKE…EHENKETKYT (126 aa). Cys204 and Cys313 are oxidised to a cystine. Ig-like C2-type domains follow at residues 565–666 and 673–758; these read PHHE…TSID and PSIT…VQVN. Intrachain disulfides connect Cys592/Cys650 and Cys696/Cys740. Asn697 carries an N-linked (GlcNAc...) asparagine glycan. A helical transmembrane segment spans residues 765-785; that stretch reads LFFYWFLALLLLISIIAVFLL. The Cytoplasmic portion of the chain corresponds to 786–1227; the sequence is TCKLRASNRL…ERYLIVESHA (442 aa). The Protein kinase domain occupies 847 to 1175; the sequence is LEILNPIGSG…HMRDSSSQFL (329 aa). Residues 853 to 861 and Lys886 contribute to the ATP site; that span reads IGSGHFGVV. The Proton acceptor role is filled by Asp1030. Residues 1194-1227 form a disordered region; it reads DWIQDSRPDVPNVSFQKSPKKQKEERYLIVESHA. Over residues 1214–1227 the composition is skewed to basic and acidic residues; the sequence is KQKEERYLIVESHA.

Belongs to the protein kinase superfamily. Tyr protein kinase family. As to expression, expressed in the ALA neuron.

The protein resides in the cell membrane. It carries out the reaction L-tyrosyl-[protein] + ATP = O-phospho-L-tyrosyl-[protein] + ADP + H(+). Receptor tyrosine kinase which may be involved, downstream of pvf-1, in the positioning of ray 1, the most anterior ray sensillum in the male tail. The protein is Tyrosine-protein kinase receptor ver-3 of Caenorhabditis elegans.